Consider the following 387-residue polypeptide: Phosphoglycerate kinase (387 aa).

Residues Asp-21–Asn-23, Arg-36, His-59–Arg-62, Arg-113, and Arg-146 contribute to the substrate site. Residues Lys-197, Glu-314, and Gly-340–Thr-343 each bind ATP.

This sequence belongs to the phosphoglycerate kinase family. In terms of assembly, monomer.

The protein localises to the cytoplasm. The catalysed reaction is (2R)-3-phosphoglycerate + ATP = (2R)-3-phospho-glyceroyl phosphate + ADP. It participates in carbohydrate degradation; glycolysis; pyruvate from D-glyceraldehyde 3-phosphate: step 2/5. This Yersinia enterocolitica serotype O:8 / biotype 1B (strain NCTC 13174 / 8081) protein is Phosphoglycerate kinase.